A 68-amino-acid chain; its full sequence is DNA-directed RNA polymerase subunit omega (68 aa).

The protein belongs to the RNA polymerase subunit omega family. As to quaternary structure, the RNAP catalytic core consists of 2 alpha, 1 beta, 1 beta' and 1 omega subunit. When a sigma factor is associated with the core the holoenzyme is formed, which can initiate transcription.

It catalyses the reaction RNA(n) + a ribonucleoside 5'-triphosphate = RNA(n+1) + diphosphate. In terms of biological role, promotes RNA polymerase assembly. Latches the N- and C-terminal regions of the beta' subunit thereby facilitating its interaction with the beta and alpha subunits. The polypeptide is DNA-directed RNA polymerase subunit omega (Brevibacillus brevis (strain 47 / JCM 6285 / NBRC 100599)).